The chain runs to 636 residues: Serine/threonine-protein kinase hal4 (636 aa).

Over residues 1-11 (MGEKDKLHEIS) the composition is skewed to basic and acidic residues. Disordered stretches follow at residues 1–167 (MGEK…AGVV) and 181–261 (AASP…PSSA). The span at 33-45 (EPPPPSSQQPPST) shows a compositional bias: pro residues. Composition is skewed to polar residues over residues 56–92 (ALKQNVRPSLNSVQQTPASIDAVASSSNVSLQSQQPL) and 113–124 (NPSRHVSSTSNK). A compositionally biased stretch (low complexity) spans 140-155 (PSGSVPPSASVSRANS). The span at 182–226 (ASPNPSTPSNGPAPVSTTATPSRNPVTRLQRIFSQNSVSRQNSRT) shows a compositional bias: polar residues. At Ser-218 the chain carries Phosphoserine. A compositionally biased stretch (low complexity) spans 234–261 (NTEETNSTGGSETGGAANSSSTSNPSSA). Thr-238 and Thr-241 each carry phosphothreonine. Ser-299 bears the Phosphoserine mark. In terms of domain architecture, Protein kinase spans 351 to 623 (GRCQEVIGRG…AKQIMKSEWV (273 aa)). Residues 357-365 (IGRGAFGVV) and Lys-385 each bind ATP. The active-site Proton acceptor is Asp-481.

Belongs to the protein kinase superfamily. Ser/Thr protein kinase family. Interacts with sty1.

It localises to the cytoplasm. It carries out the reaction L-seryl-[protein] + ATP = O-phospho-L-seryl-[protein] + ADP + H(+). It catalyses the reaction L-threonyl-[protein] + ATP = O-phospho-L-threonyl-[protein] + ADP + H(+). Functionally, promotes K(+) uptake, by the potassium transporter trk1-trk2, which leads to the subsequent cellular resistance to toxic cations such as Na(+), Li(+) and Ca(2+). The chain is Serine/threonine-protein kinase hal4 (hal4) from Schizosaccharomyces pombe (strain 972 / ATCC 24843) (Fission yeast).